A 147-amino-acid chain; its full sequence is uncharacterized protein (147 aa).

The next 2 membrane-spanning stretches (helical) occupy residues 35-55 (TIQL…FGNH) and 62-82 (IWLL…LFEP).

In terms of assembly, has been detected in a cytochrome bc1-aa3 supercomplex; its deletion however leaves complex activity unaffected.

It localises to the cell membrane. This is an uncharacterized protein from Corynebacterium glutamicum (strain ATCC 13032 / DSM 20300 / JCM 1318 / BCRC 11384 / CCUG 27702 / LMG 3730 / NBRC 12168 / NCIMB 10025 / NRRL B-2784 / 534).